Reading from the N-terminus, the 878-residue chain is Aconitate hydratase A (878 aa).

Residues Cys426, Cys492, and Cys495 each contribute to the [4Fe-4S] cluster site.

Belongs to the aconitase/IPM isomerase family. As to quaternary structure, monomer. [4Fe-4S] cluster is required as a cofactor.

The catalysed reaction is citrate = D-threo-isocitrate. The enzyme catalyses (2S,3R)-3-hydroxybutane-1,2,3-tricarboxylate = 2-methyl-cis-aconitate + H2O. The protein operates within carbohydrate metabolism; tricarboxylic acid cycle; isocitrate from oxaloacetate: step 2/2. It functions in the pathway organic acid metabolism; propanoate degradation. Functionally, involved in the catabolism of short chain fatty acids (SCFA) via the tricarboxylic acid (TCA)(acetyl degradation route) and probably the 2-methylcitrate cycle I (propionate degradation route). Catalyzes the reversible isomerization of citrate to isocitrate via cis-aconitate. Could catalyze the hydration of 2-methyl-cis-aconitate to yield (2R,3S)-2-methylisocitrate. The apo form of AcnA functions as a RNA-binding regulatory protein. This is Aconitate hydratase A (acnA) from Rickettsia prowazekii (strain Madrid E).